A 285-amino-acid polypeptide reads, in one-letter code: Small ribosomal subunit protein uS3 (285 aa).

The KH type-2 domain occupies 39-107 (VREFLKKKLK…PVAVNIEEVR (69 aa)). The interval 211-285 (GDAPVMRGED…RAAPPAAKGE (75 aa)) is disordered. The span at 217-241 (RGEDRPEDDRRRRNPRGDRPGDRRG) shows a compositional bias: basic and acidic residues. Positions 242 to 255 (PGAGRGGPGAGRGP) are enriched in gly residues. Composition is skewed to low complexity over residues 256–267 (ADGASAAPSGDA) and 276–285 (RAAPPAAKGE).

Belongs to the universal ribosomal protein uS3 family. In terms of assembly, part of the 30S ribosomal subunit. Forms a tight complex with proteins S10 and S14.

Its function is as follows. Binds the lower part of the 30S subunit head. Binds mRNA in the 70S ribosome, positioning it for translation. This is Small ribosomal subunit protein uS3 from Leptothrix cholodnii (strain ATCC 51168 / LMG 8142 / SP-6) (Leptothrix discophora (strain SP-6)).